We begin with the raw amino-acid sequence, 478 residues long: Isoeugenol monooxygenase (478 aa).

H167, H218, H282, and H471 together coordinate Fe cation.

The protein belongs to the carotenoid oxygenase family. It depends on Fe(2+) as a cofactor.

It catalyses the reaction (E)-isoeugenol + O2 = vanillin + acetaldehyde. With respect to regulation, inhibited by Co(2+), Ni(2+) and Zn(2+), which may inhibit enzyme activity by replacing iron in the catalytic residues. Inhibited by incubation with high concentrations of the iron chelators 1,10-phenanthroline and Tiron. However, iron is not completely removed by the chelators, suggesting that iron is tightly bound to the enzyme. Involved in isoeugenol degradation. Catalyzes the oxidative cleavage of the side chain double-bond of isoeugenol to form vanillin and acetaldehyde. The chain is Isoeugenol monooxygenase from Pseudomonas nitroreducens.